A 284-amino-acid polypeptide reads, in one-letter code: MVLMIVSGRSGSGKSVALRALEDMGFYCVDNLPVVLLPDLARTLADREISAAVSIDVRNMPESPEIFEQAMSNLPDAFSPQLLFLDADRNTLIRRYSDTRRLHPLSSKNLSLESAIDKESDLLEPLRSRADLIVDTSEMSVHELAEMLRTRLLGKRERELTMVFESFGFKHGIPIDADYVFDVRFLPNPHWDPKLRPMTGLDKPVAAFLDRHTEVHNFIYQTRSYLELWLPMLETNNRSYLTVAIGCTGGKHRSVYIAEQLADYFRSRGKNVQSRHRTLEKRKP.

Residue 8 to 15 (GRSGSGKS) coordinates ATP. 56 to 59 (DVRN) contacts GTP. The segment at 266-284 (RSRGKNVQSRHRTLEKRKP) is RNA-binding.

It belongs to the RapZ-like family. RapZ subfamily. As to quaternary structure, homotrimer.

In terms of biological role, modulates the synthesis of GlmS, by affecting the processing and stability of the regulatory small RNA GlmZ. When glucosamine-6-phosphate (GlcN6P) concentrations are high in the cell, RapZ binds GlmZ and targets it to cleavage by RNase E. Consequently, GlmZ is inactivated and unable to activate GlmS synthesis. Under low GlcN6P concentrations, RapZ is sequestered and inactivated by an other regulatory small RNA, GlmY, preventing GlmZ degradation and leading to synthesis of GlmS. This chain is RNase adapter protein RapZ, found in Shigella boydii serotype 18 (strain CDC 3083-94 / BS512).